A 362-amino-acid chain; its full sequence is MSTDNTTALPGAADTTTTDVLIVGAGPVGLFAAFQAGVLGLKCELIDVLDRAGGQCTELYPEKPIYDIPAVPGCLAQDLVDRLLEQCAPFAFPMHFNQRAESVAEVLPAQDGVHSRLLVTTDSGKRFDVAAVLVCAGAGAFAPQRVSLPEAPGLEGRHVHYAVRDVSRFAGKRVVVAGGGDSALDWALALRKVAARVTLLHRREGFRAADGSVAEMRAAVEAGEMDFVIGMLGALKTSGEGEHAALMEIEIRSRDGVQTLAADELVALYGLVSEPGPIAQWDMDMRAGRILVDTTTYESSRRGIFAAGDIAYYANKQKLILSGFHEAALALRKAYHYAFPQKSLVHVHTSNNAALKEKLTHA.

7 residues coordinate FAD: aspartate 47, glutamine 55, tyrosine 60, alanine 100, phenylalanine 141, aspartate 309, and serine 350.

The protein belongs to the ferredoxin--NADP reductase type 2 family. As to quaternary structure, homodimer. The cofactor is FAD.

It catalyses the reaction 2 reduced [2Fe-2S]-[ferredoxin] + NADP(+) + H(+) = 2 oxidized [2Fe-2S]-[ferredoxin] + NADPH. The chain is Ferredoxin--NADP reductase 1 from Cupriavidus pinatubonensis (strain JMP 134 / LMG 1197) (Cupriavidus necator (strain JMP 134)).